A 512-amino-acid chain; its full sequence is Peroxisomal N(1)-acetyl-spermine/spermidine oxidase (512 aa).

The residue at position 1 (Met-1) is an N-acetylmethionine. The propeptide occupies Met-1 to Arg-6. Residues Ala-25, Glu-46, Arg-54, and His-70–Trp-71 each bind FAD. Substrate contacts are provided by His-73 and Val-195. Residue Val-248 coordinates FAD. Asn-321 contacts substrate. FAD contacts are provided by residues Glu-473 and Thr-482–Thr-483. Residues Pro-510–Leu-512 carry the Microbody targeting signal motif.

Belongs to the flavin monoamine oxidase family. In terms of assembly, monomer. The cofactor is FAD.

The protein localises to the peroxisome. It localises to the cytoplasm. The catalysed reaction is N(1)-acetylspermine + O2 + H2O = 3-acetamidopropanal + spermidine + H2O2. It carries out the reaction N(1)-acetylspermidine + O2 + H2O = 3-acetamidopropanal + putrescine + H2O2. The enzyme catalyses N(1),N(12)-diacetylspermine + O2 + H2O = 3-acetamidopropanal + N(1)-acetylspermidine + H2O2. The protein operates within amine and polyamine metabolism; spermine metabolism. Functionally, flavoenzyme which catalyzes the oxidation of N(1)-acetylspermine to spermidine and is thus involved in the polyamine back-conversion. Can also oxidize N(1)-acetylspermidine to putrescine. Substrate specificity: N(1)-acetylspermine = N(1)-acetylspermidine &gt; N(1),N(12)-diacylspermine &gt;&gt; spermine. Does not oxidize spermidine. Plays an important role in the regulation of polyamine intracellular concentration. This Bos taurus (Bovine) protein is Peroxisomal N(1)-acetyl-spermine/spermidine oxidase (PAOX).